We begin with the raw amino-acid sequence, 922 residues long: Autophagy-related protein 9B (922 aa).

Disordered stretches follow at residues 1-22 (MVRR…DLGP) and 85-144 (TPHN…MGPL). At 1–206 (MVRRTGWGGS…KIYSYHQRNG (206 aa)) the chain is on the cytoplasmic side. Over residues 85–114 (TPHNVLPTPTTPSTQAHPTMIHTSASPSWG) the composition is skewed to polar residues. Residues 115–124 (SHSTPPLASA) show a composition bias toward low complexity. Residues 150-153 (YERL) carry the Tyrosine-based sorting signal motif. The chain crosses the membrane as a helical span at residues 207–227 (FACILLEDVFQLGQFIFIVTF). Residues 228–275 (TTFLLRCVDYNVLFNNQPKNHTRRGPLHSKVTLSDAILPSAQCAEKIH) lie on the Lumenal side of the membrane. A helical transmembrane segment spans residues 276–296 (DSPLLVFLLVLAAGFWLFQLL). The Cytoplasmic segment spans residues 297–437 (RSVCNLFSYW…GVLANRWRRT (141 aa)). Residues 438-458 (VLLLAAVNLALSPLVLAWQVL) lie within the membrane without spanning it. Residues 459–523 (HAFYSHVELL…RAAEPPAPLR (65 aa)) are Cytoplasmic-facing. The helical transmembrane segment at 524–544 (ALLARQLVFFSGALFAALLVL) threads the bilayer. The Lumenal portion of the chain corresponds to 545-550 (TIYDED). Residues 551-571 (VLAVEHVLTTMTALGVTATVA) traverse the membrane as a helical segment. Topologically, residues 572-624 (RSFIPEEQCQGRSSQLLLQAALAHMHYLPEEPGATGARASSYWQMAQLLQYRA) are cytoplasmic. Residues 625-645 (VSLLEELLSPLLTPLFLLFWF) lie within the membrane without spanning it. At 646-922 (RPRALEIIDF…QKEPLTGPLH (277 aa)) the chain is on the cytoplasmic side. Positions 848–922 (ELWGEASASS…QKEPLTGPLH (75 aa)) are disordered. 2 stretches are compositionally biased toward low complexity: residues 854–870 (SASS…QPGS) and 877–889 (SWSS…ASSP). Over residues 890–899 (RQQWGTQRAQ) the composition is skewed to polar residues.

Belongs to the ATG9 family. Homotrimer; forms a homotrimer with a central pore that forms a path between the two membrane leaflets. In terms of tissue distribution, expressed in heart, brain, and placenta and testis.

The protein localises to the preautophagosomal structure membrane. The enzyme catalyses a 1,2-diacyl-sn-glycero-3-phosphocholine(in) = a 1,2-diacyl-sn-glycero-3-phosphocholine(out). It carries out the reaction a 1,2-diacyl-sn-glycero-3-phospho-L-serine(in) = a 1,2-diacyl-sn-glycero-3-phospho-L-serine(out). It catalyses the reaction a 1,2-diacyl-sn-glycero-3-phosphoethanolamine(in) = a 1,2-diacyl-sn-glycero-3-phosphoethanolamine(out). Functionally, phospholipid scramblase involved in autophagy by mediating autophagosomal membrane expansion. Cycles between the preautophagosomal structure/phagophore assembly site (PAS) and the cytoplasmic vesicle pool and supplies membrane for the growing autophagosome. Lipid scramblase activity plays a key role in preautophagosomal structure/phagophore assembly by distributing the phospholipids that arrive through ATG2 (ATG2A or ATG2B) from the cytoplasmic to the luminal leaflet of the bilayer, thereby driving autophagosomal membrane expansion. In addition to autophagy, also plays a role in necrotic cell death. The polypeptide is Autophagy-related protein 9B (Mus musculus (Mouse)).